A 343-amino-acid chain; its full sequence is Tetraacyldisaccharide 4'-kinase (343 aa).

51–58 contacts ATP; the sequence is TVGGAGKT.

This sequence belongs to the LpxK family.

It catalyses the reaction a lipid A disaccharide + ATP = a lipid IVA + ADP + H(+). The protein operates within glycolipid biosynthesis; lipid IV(A) biosynthesis; lipid IV(A) from (3R)-3-hydroxytetradecanoyl-[acyl-carrier-protein] and UDP-N-acetyl-alpha-D-glucosamine: step 6/6. Transfers the gamma-phosphate of ATP to the 4'-position of a tetraacyldisaccharide 1-phosphate intermediate (termed DS-1-P) to form tetraacyldisaccharide 1,4'-bis-phosphate (lipid IVA). This Xanthobacter autotrophicus (strain ATCC BAA-1158 / Py2) protein is Tetraacyldisaccharide 4'-kinase.